Here is a 512-residue protein sequence, read N- to C-terminus: Glutamyl-tRNA(Gln) amidotransferase subunit A (512 aa).

Active-site charge relay system residues include Lys82 and Ser157. Ser181 functions as the Acyl-ester intermediate in the catalytic mechanism.

The protein belongs to the amidase family. GatA subfamily. As to quaternary structure, heterotrimer of A, B and C subunits.

It catalyses the reaction L-glutamyl-tRNA(Gln) + L-glutamine + ATP + H2O = L-glutaminyl-tRNA(Gln) + L-glutamate + ADP + phosphate + H(+). Allows the formation of correctly charged Gln-tRNA(Gln) through the transamidation of misacylated Glu-tRNA(Gln) in organisms which lack glutaminyl-tRNA synthetase. The reaction takes place in the presence of glutamine and ATP through an activated gamma-phospho-Glu-tRNA(Gln). This Bordetella bronchiseptica (strain ATCC BAA-588 / NCTC 13252 / RB50) (Alcaligenes bronchisepticus) protein is Glutamyl-tRNA(Gln) amidotransferase subunit A.